We begin with the raw amino-acid sequence, 256 residues long: Acetyl-coenzyme A carboxylase carboxyl transferase subunit alpha (256 aa).

The CoA carboxyltransferase C-terminal domain occupies 1 to 236; it reads MSDVARILKE…KTAIVDELAE (236 aa).

It belongs to the AccA family. As to quaternary structure, acetyl-CoA carboxylase is a heterohexamer composed of biotin carboxyl carrier protein (AccB), biotin carboxylase (AccC) and two subunits each of ACCase subunit alpha (AccA) and ACCase subunit beta (AccD).

It is found in the cytoplasm. The catalysed reaction is N(6)-carboxybiotinyl-L-lysyl-[protein] + acetyl-CoA = N(6)-biotinyl-L-lysyl-[protein] + malonyl-CoA. It functions in the pathway lipid metabolism; malonyl-CoA biosynthesis; malonyl-CoA from acetyl-CoA: step 1/1. Functionally, component of the acetyl coenzyme A carboxylase (ACC) complex. First, biotin carboxylase catalyzes the carboxylation of biotin on its carrier protein (BCCP) and then the CO(2) group is transferred by the carboxyltransferase to acetyl-CoA to form malonyl-CoA. The polypeptide is Acetyl-coenzyme A carboxylase carboxyl transferase subunit alpha (Streptococcus thermophilus (strain ATCC BAA-250 / LMG 18311)).